Reading from the N-terminus, the 387-residue chain is 3-ketoacyl-CoA thiolase (387 aa).

The active-site Acyl-thioester intermediate is C91. Residues H343 and C373 each act as proton acceptor in the active site.

This sequence belongs to the thiolase-like superfamily. Thiolase family. As to quaternary structure, heterotetramer of two alpha chains (FadB) and two beta chains (FadA).

It is found in the cytoplasm. The enzyme catalyses an acyl-CoA + acetyl-CoA = a 3-oxoacyl-CoA + CoA. Its pathway is lipid metabolism; fatty acid beta-oxidation. In terms of biological role, catalyzes the final step of fatty acid oxidation in which acetyl-CoA is released and the CoA ester of a fatty acid two carbons shorter is formed. The chain is 3-ketoacyl-CoA thiolase from Escherichia fergusonii (strain ATCC 35469 / DSM 13698 / CCUG 18766 / IAM 14443 / JCM 21226 / LMG 7866 / NBRC 102419 / NCTC 12128 / CDC 0568-73).